Reading from the N-terminus, the 241-residue chain is Adapter protein MecA (241 aa).

The tract at residues 115 to 141 (TDSNDKNNDDSSYMSDGNPADLNGYAN) is disordered.

This sequence belongs to the MecA family. As to quaternary structure, homodimer.

In terms of biological role, enables the recognition and targeting of unfolded and aggregated proteins to the ClpC protease or to other proteins involved in proteolysis. The protein is Adapter protein MecA of Pediococcus pentosaceus (strain ATCC 25745 / CCUG 21536 / LMG 10740 / 183-1w).